Reading from the N-terminus, the 263-residue chain is Tryptophan synthase alpha chain (263 aa).

Catalysis depends on proton acceptor residues Glu46 and Asp57.

The protein belongs to the TrpA family. Tetramer of two alpha and two beta chains.

It catalyses the reaction (1S,2R)-1-C-(indol-3-yl)glycerol 3-phosphate + L-serine = D-glyceraldehyde 3-phosphate + L-tryptophan + H2O. It functions in the pathway amino-acid biosynthesis; L-tryptophan biosynthesis; L-tryptophan from chorismate: step 5/5. The alpha subunit is responsible for the aldol cleavage of indoleglycerol phosphate to indole and glyceraldehyde 3-phosphate. The sequence is that of Tryptophan synthase alpha chain from Bacteroides fragilis (strain ATCC 25285 / DSM 2151 / CCUG 4856 / JCM 11019 / LMG 10263 / NCTC 9343 / Onslow / VPI 2553 / EN-2).